Here is a 262-residue protein sequence, read N- to C-terminus: Ribonuclease 3 (262 aa).

The region spanning 18-141 (LATFLKNLDI…LVGAIYEDMG (124 aa)) is the RNase III domain. Glu59 serves as a coordination point for Mg(2+). Asp63 is an active-site residue. Residues Asp127 and Glu130 each coordinate Mg(2+). The active site involves Glu130.

It belongs to the ribonuclease III family. As to quaternary structure, homodimer. The cofactor is Mg(2+).

The protein localises to the cytoplasm. The catalysed reaction is Endonucleolytic cleavage to 5'-phosphomonoester.. Its function is as follows. Digests double-stranded RNA. Involved in the processing of primary rRNA transcript to yield the immediate precursors to the large and small rRNAs (23S and 16S). Processes some mRNAs, and tRNAs when they are encoded in the rRNA operon. Processes pre-crRNA and tracrRNA of type II CRISPR loci if present in the organism. This Mycoplasma genitalium (strain ATCC 33530 / DSM 19775 / NCTC 10195 / G37) (Mycoplasmoides genitalium) protein is Ribonuclease 3.